The chain runs to 120 residues: Anti-adapter protein IraM (120 aa).

This sequence belongs to the IraM/RssC family.

The protein resides in the cytoplasm. Involved in the stabilization of the sigma stress factor RpoS. The sequence is that of Anti-adapter protein IraM from Salmonella typhimurium (strain LT2 / SGSC1412 / ATCC 700720).